A 756-amino-acid chain; its full sequence is Amine oxidase [copper-containing] 2 (756 aa).

Over 1–4 (MHLK) the chain is Cytoplasmic. Residues 5 to 25 (IVLAFLALSLITIFALAYVLL) form a helical membrane-spanning segment. The Extracellular segment spans residues 26-756 (TSPGGSSQPP…DLPPFSYHGF (731 aa)). N-linked (GlcNAc...) asparagine glycosylation is found at Asn-133, Asn-198, and Asn-226. The Proton acceptor role is filled by Asp-380. The cysteines at positions 398 and 424 are disulfide-linked. Residue Tyr-465 is the Schiff-base intermediate with substrate; via topaquinone of the active site. Tyr-465 is modified (2',4',5'-topaquinone). Residues His-516 and His-518 each contribute to the Cu(2+) site. 7 residues coordinate Ca(2+): Asp-525, Leu-526, Asp-527, Glu-568, Glu-637, Phe-659, and Asn-661. A glycan (N-linked (GlcNAc...) asparagine) is linked at Asn-662. Ca(2+) is bound by residues Glu-663, Asp-669, and Leu-670. A Cu(2+)-binding site is contributed by His-680. Cys-730 and Cys-737 are disulfide-bonded.

Belongs to the copper/topaquinone oxidase family. Homodimer; disulfide-linked. Probably forms heterodimers with AOC3. Requires Cu(2+) as cofactor. Ca(2+) serves as cofactor. It depends on L-topaquinone as a cofactor. Post-translationally, topaquinone (TPQ) is generated by copper-dependent autoxidation of a specific tyrosyl residue. Expressed in many tissues including adipocytes with higher expression in retina where it is active. As to expression, not expressed in testis. In terms of tissue distribution, not expressed in thymus.

Its subcellular location is the cell membrane. The protein resides in the cytoplasm. It catalyses the reaction 2-phenylethylamine + O2 + H2O = 2-phenylacetaldehyde + H2O2 + NH4(+). It carries out the reaction tryptamine + O2 + H2O = indole-3-acetaldehyde + H2O2 + NH4(+). The enzyme catalyses tyramine + O2 + H2O = (4-hydroxyphenyl)acetaldehyde + H2O2 + NH4(+). Functionally, catalyzes the oxidative deamination of primary amines to the corresponding aldehydes with the concomitant production of hydrogen peroxide and ammonia. Has a preference for 2-phenylethylamine, tryptamine and tyramine. Could also act on methylamine and benzylamine but much less efficiently. This Homo sapiens (Human) protein is Amine oxidase [copper-containing] 2.